Reading from the N-terminus, the 198-residue chain is Inositol diphosphatase DSP4 (198 aa).

Positions 1-23 (MTLESYAGDVHTVPQSENSMEER) are disordered. The region spanning 34-188 (NFAMVDNGIF…LKHTPLSFSC (155 aa)) is the Tyrosine-protein phosphatase domain. The segment at 90–102 (FGIERCKEPFVNI) is WPD loop important for active site topology. Positions 101 and 102 each coordinate 1D-myo-inositol hexakisphosphate. Cys126 acts as the Phosphocysteine intermediate in catalysis.

This sequence belongs to the protein-tyrosine phosphatase family. Atypical dual-specificity phosphatase Siw14-like subfamily. In terms of tissue distribution, highly expressed in flowers and at lower levels in roots, leaves, stems and siliques.

It carries out the reaction 5-diphospho-1D-myo-inositol 1,2,3,4,6-pentakisphosphate + H2O = 1D-myo-inositol hexakisphosphate + phosphate + H(+). The catalysed reaction is 1,5-bis(diphospho)-1D-myo-inositol 2,3,4,6-tetrakisphosphate + H2O = 1-diphospho-1D-myo-inositol 2,3,4,5,6-pentakisphosphate + phosphate + 2 H(+). It catalyses the reaction 3,5-bis(diphospho)-1D-myo-inositol 1,2,4,6-tetrakisphosphate + H2O = 3-diphospho-1D-myo-inositol 1,2,4,5,6-pentakisphosphate + phosphate + 2 H(+). The enzyme catalyses 6-diphospho-1D-myo-inositol pentakisphosphate + H2O = 1D-myo-inositol hexakisphosphate + phosphate + H(+). Its function is as follows. Cleaves the beta-phosphate at the 5-position of soluble inositol pyrophosphates. Has highest activity on 5-diphosphoinositol 1,2,3,4,6-pentakisphosphate (5-InsP(7)), 1,5-bis-diphosphoinositol 2,3,4,6-tetrakisphosphate (1,5-InsP(8)) and 3,5-InsP(8). Acts as a negative regulator of defense responses against the bacterial pathogen Pseudomonas syringae pv tomato strain DC3000. The polypeptide is Inositol diphosphatase DSP4 (Arabidopsis thaliana (Mouse-ear cress)).